Consider the following 736-residue polypeptide: Microtubule-associated protein mu-2 (736 aa).

This sequence belongs to the orthoreovirus mu-2 protein family. As to quaternary structure, interacts with protein mu-NS; in viral inclusions. Interacts with polymerase lambda-3; this interaction stimulates the ATPase activity of mu-2. The cofactor is a divalent metal cation.

The protein localises to the virion. It is found in the host cytoplasm. Its subcellular location is the host cytoskeleton. Minor inner capsid (core) component. Displays NTPase and RNA 5'-triphosphatase (RTPase) activities. ATP is the preferred substrate for hydrolysis. May function as a cofactor of polymerase lambda-3. Associates with microtubules and plays a role in the formation, structural organization and morphology of viral inclusions, where the assembly of cores and the replication of viral RNA occur. Together with mu-NS, recruits the other core proteins to these inclusions. The protein is Microtubule-associated protein mu-2 (M1) of Mammalia (T3D).